Reading from the N-terminus, the 293-residue chain is uncharacterized protein (293 aa).

In terms of domain architecture, HTH lysR-type spans 1–60 (MHITLRQLEVFAEVLKSGSTTQASVMLALSQSAVSAALTDLEGQLGVQLFDRVGKRLVVN). The segment at residues 20–39 (TTQASVMLALSQSAVSAALT) is a DNA-binding region (H-T-H motif).

Belongs to the LysR transcriptional regulatory family.

This is an uncharacterized protein from Escherichia coli O157:H7.